We begin with the raw amino-acid sequence, 216 residues long: uncharacterized protein (216 aa).

Residues 182-193 (STSNASVNSDDA) are compositionally biased toward polar residues. The disordered stretch occupies residues 182 to 204 (STSNASVNSDDASTAELGPTSEE).

This is an uncharacterized protein from Caenorhabditis elegans.